Here is a 559-residue protein sequence, read N- to C-terminus: Endoglin (559 aa).

Positions 1–20 (MKSICCVLVLCLLLCRRSTA) are cleaved as a signal peptide. The Extracellular segment spans residues 21–473 (SESICELKDV…SCFEFGLSAV (453 aa)). Disulfide bonds link Cys25/Cys201 and Cys47/Cys174. N-linked (GlcNAc...) asparagine glycans are attached at residues Asn55, Asn79, Asn109, Asn133, Asn170, Asn302, and Asn352. Cys381 and Cys427 form a disulfide bridge. Residues 474-494 (LGIAFGGFLIGVLLTGALWFI) form a helical membrane-spanning segment. The Cytoplasmic portion of the chain corresponds to 495 to 559 (KIRTGHPVAL…TQSTPTSSMA (65 aa)). The tract at residues 528–559 (RQPVPTHPSPSENSSANASIGSTQSTPTSSMA) is disordered. The segment covering 536-546 (SPSENSSANAS) has biased composition (low complexity). Residues 547 to 559 (IGSTQSTPTSSMA) show a composition bias toward polar residues.

Homodimer; disulfide-linked.

The protein resides in the cell membrane. Its function is as follows. Vascular endothelium glycoprotein that plays an important role in the regulation of angiogenesis. Required for normal structure and integrity of adult vasculature. Important for endothelial cell shape changes in response to blood flow, which drive vascular remodeling and establishment of normal vascular morphology during angiogenesis. The protein is Endoglin of Danio rerio (Zebrafish).